Reading from the N-terminus, the 166-residue chain is Crossover junction endodeoxyribonuclease RuvC (166 aa).

Active-site residues include aspartate 7, glutamate 67, and aspartate 140. Residues aspartate 7, glutamate 67, and aspartate 140 each contribute to the Mg(2+) site.

The protein belongs to the RuvC family. As to quaternary structure, homodimer which binds Holliday junction (HJ) DNA. The HJ becomes 2-fold symmetrical on binding to RuvC with unstacked arms; it has a different conformation from HJ DNA in complex with RuvA. In the full resolvosome a probable DNA-RuvA(4)-RuvB(12)-RuvC(2) complex forms which resolves the HJ. Mg(2+) is required as a cofactor.

The protein resides in the cytoplasm. It carries out the reaction Endonucleolytic cleavage at a junction such as a reciprocal single-stranded crossover between two homologous DNA duplexes (Holliday junction).. Functionally, the RuvA-RuvB-RuvC complex processes Holliday junction (HJ) DNA during genetic recombination and DNA repair. Endonuclease that resolves HJ intermediates. Cleaves cruciform DNA by making single-stranded nicks across the HJ at symmetrical positions within the homologous arms, yielding a 5'-phosphate and a 3'-hydroxyl group; requires a central core of homology in the junction. The consensus cleavage sequence is 5'-(A/T)TT(C/G)-3'. Cleavage occurs on the 3'-side of the TT dinucleotide at the point of strand exchange. HJ branch migration catalyzed by RuvA-RuvB allows RuvC to scan DNA until it finds its consensus sequence, where it cleaves and resolves the cruciform DNA. The protein is Crossover junction endodeoxyribonuclease RuvC of Brevibacillus brevis (strain 47 / JCM 6285 / NBRC 100599).